The primary structure comprises 401 residues: Argininosuccinate synthase (401 aa).

9-17 is a binding site for ATP; it reads AYSGGLDTS. Tyr-88 lines the L-citrulline pocket. ATP is bound at residue Gly-118. 3 residues coordinate L-aspartate: Thr-120, Asn-124, and Asp-125. Asn-124 lines the L-citrulline pocket. 5 residues coordinate L-citrulline: Arg-128, Ser-177, Ser-186, Glu-262, and Tyr-274.

This sequence belongs to the argininosuccinate synthase family. Type 1 subfamily. In terms of assembly, homotetramer.

Its subcellular location is the cytoplasm. It carries out the reaction L-citrulline + L-aspartate + ATP = 2-(N(omega)-L-arginino)succinate + AMP + diphosphate + H(+). It participates in amino-acid biosynthesis; L-arginine biosynthesis; L-arginine from L-ornithine and carbamoyl phosphate: step 2/3. This is Argininosuccinate synthase from Chlorobaculum parvum (strain DSM 263 / NCIMB 8327) (Chlorobium vibrioforme subsp. thiosulfatophilum).